Reading from the N-terminus, the 182-residue chain is ATP-dependent protease subunit HslV (182 aa).

T2 is an active-site residue. Positions 157, 160, and 163 each coordinate Na(+).

This sequence belongs to the peptidase T1B family. HslV subfamily. As to quaternary structure, a double ring-shaped homohexamer of HslV is capped on each side by a ring-shaped HslU homohexamer. The assembly of the HslU/HslV complex is dependent on binding of ATP.

Its subcellular location is the cytoplasm. It carries out the reaction ATP-dependent cleavage of peptide bonds with broad specificity.. Its activity is regulated as follows. Allosterically activated by HslU binding. Functionally, protease subunit of a proteasome-like degradation complex believed to be a general protein degrading machinery. The polypeptide is ATP-dependent protease subunit HslV (Sodalis glossinidius (strain morsitans)).